The following is an 822-amino-acid chain: Fibroblast growth factor receptor 1 (822 aa).

The signal sequence occupies residues 1-21 (MWGWRGLLFWAVLVTATLCTA). Residues 22–376 (RPAPTLPEQA…AVMTSPLYLE (355 aa)) are Extracellular-facing. The Ig-like C2-type 1 domain maps to 25–119 (PTLPEQAQPW…DTTYFSVNVS (95 aa)). A disulfide bridge links Cys-55 with Cys-101. Asn-77 and Asn-117 each carry an N-linked (GlcNAc...) asparagine glycan. Positions 120-162 (DALPSSEDDDDDDDSSSEEKETDNTKPNRRPVAPYWTSPEKME) are disordered. The span at 125–135 (SEDDDDDDDSS) shows a compositional bias: acidic residues. Residues 136–145 (SEEKETDNTK) are compositionally biased toward basic and acidic residues. 2 Ig-like C2-type domains span residues 158 to 246 (PEKM…YQLD) and 255 to 357 (PILQ…AWLT). The heparin-binding stretch occupies residues 160–177 (KMEKKLHAVPAAKTVKFK). An intrachain disulfide couples Cys-178 to Cys-230. N-linked (GlcNAc...) asparagine glycosylation is found at Asn-227, Asn-240, Asn-264, Asn-296, Asn-317, and Asn-330. An intrachain disulfide couples Cys-277 to Cys-341. A helical transmembrane segment spans residues 377-397 (IIIYCTGAFLISCMVGSVIIY). Topologically, residues 398–822 (KMKSGTKKSD…QLANGGLNRR (425 aa)) are cytoplasmic. Residue Tyr-463 is modified to Phosphotyrosine; by autocatalysis. The 290-residue stretch at 478 to 767 (LVLGKPLGEG…VALTSNQEYL (290 aa)) folds into the Protein kinase domain. Residues 484-490 (LGEGCFG), Lys-514, 562-564 (EYA), and Asn-568 each bind ATP. Residues Tyr-583 and Tyr-585 each carry the phosphotyrosine; by autocatalysis modification. Asp-623 serves as the catalytic Proton acceptor. Residues Arg-627 and Asp-641 each contribute to the ATP site. Residues Tyr-653, Tyr-654, Tyr-730, and Tyr-766 each carry the phosphotyrosine; by autocatalysis modification. The interval 770–822 (SMPLDQDSPSFPDTRSSTCSSGEDSVFSHEPFPEEPCLPRHPTQLANGGLNRR) is disordered. The segment covering 776-792 (DSPSFPDTRSSTCSSGE) has biased composition (polar residues).

The protein belongs to the protein kinase superfamily. Tyr protein kinase family. Fibroblast growth factor receptor subfamily. As to quaternary structure, monomer. Homodimer after ligand binding. Interacts predominantly with FGF1 and FGF2, but can also interact with FGF3, FGF4, FGF5, FGF6, FGF8, FGF10, FGF19, FGF21, FGF22 and FGF23 (in vitro). Ligand specificity is determined by tissue-specific expression of isoforms, and differences in the third Ig-like domain are crucial for ligand specificity. Affinity for fibroblast growth factors (FGFs) is increased by heparan sulfate glycosaminoglycans that function as coreceptors. Likewise, KLB increases the affinity for FGF19, FGF21 and FGF23. Interacts (phosphorylated on Tyr-766) with PLCG1 (via SH2 domains). Interacts with FRS2. Interacts (via C-terminus) with NEDD4 (via WW3 domain). Interacts with RPS6KA1. Interacts with KL. Interacts with SHB (via SH2 domain) and GRB10. Interacts with ANOS1; this interaction does not interfere with FGF2-binding to FGFR1, but prevents binding of heparin-bound FGF2. Interacts with SOX2 and SOX3. Interacts with FLRT1, FLRT2 and FLRT3. Found in a ternary complex with FGF1 and ITGAV:ITGB3. Post-translationally, autophosphorylated. Binding of FGF family members together with heparan sulfate proteoglycan or heparin promotes receptor dimerization and autophosphorylation on tyrosine residues. Autophosphorylation occurs in trans between the two FGFR molecules present in the dimer and proceeds in a highly ordered manner. Initial autophosphorylation at Tyr-653 increases the kinase activity by a factor of 50 to 100. After this, Tyr-583 becomes phosphorylated, followed by phosphorylation of Tyr-463, Tyr-766, Tyr-583 and Tyr-585. In a third stage, Tyr-654 is autophosphorylated, resulting in a further tenfold increase of kinase activity. Phosphotyrosine residues provide docking sites for interacting proteins and so are crucial for FGFR1 function and its regulation. Ubiquitinated. FGFR1 is rapidly ubiquitinated by NEDD4 after autophosphorylation, leading to internalization and lysosomal degradation. CBL is recruited to activated FGFR1 via FRS2 and GRB2, and mediates ubiquitination and subsequent degradation of FGFR1. In terms of processing, N-glycosylated in the endoplasmic reticulum. The N-glycan chains undergo further maturation to an Endo H-resistant form in the Golgi apparatus. As to expression, expressed in the parathyroid.

The protein localises to the cell membrane. It localises to the nucleus. The protein resides in the cytoplasm. Its subcellular location is the cytosol. It is found in the cytoplasmic vesicle. It carries out the reaction L-tyrosyl-[protein] + ATP = O-phospho-L-tyrosyl-[protein] + ADP + H(+). Its activity is regulated as follows. Present in an inactive conformation in the absence of bound ligand. Ligand binding leads to dimerization and activation by sequential autophosphorylation on tyrosine residues. Tyrosine-protein kinase that acts as a cell-surface receptor for fibroblast growth factors and plays an essential role in the regulation of embryonic development, cell proliferation, differentiation and migration. Required for normal mesoderm patterning and correct axial organization during embryonic development, normal skeletogenesis and normal development of the gonadotropin-releasing hormone (GnRH) neuronal system. Phosphorylates PLCG1, FRS2, GAB1 and SHB. Ligand binding leads to the activation of several signaling cascades. Activation of PLCG1 leads to the production of the cellular signaling molecules diacylglycerol and inositol 1,4,5-trisphosphate. Phosphorylation of FRS2 triggers recruitment of GRB2, GAB1, PIK3R1 and SOS1, and mediates activation of RAS, MAPK1/ERK2, MAPK3/ERK1 and the MAP kinase signaling pathway, as well as of the AKT1 signaling pathway. Promotes phosphorylation of SHC1, STAT1 and PTPN11/SHP2. In the nucleus, enhances RPS6KA1 and CREB1 activity and contributes to the regulation of transcription. FGFR1 signaling is down-regulated by IL17RD/SEF, and by FGFR1 ubiquitination, internalization and degradation. This is Fibroblast growth factor receptor 1 (Fgfr1) from Rattus norvegicus (Rat).